A 458-amino-acid polypeptide reads, in one-letter code: Flavonol 3-O-glucosyltransferase UGT76E12 (458 aa).

The active-site Proton acceptor is the His-25. His-25 is a binding site for an anthocyanidin. Asp-118 acts as the Charge relay in catalysis. 8 residues coordinate UDP-alpha-D-glucose: Thr-140, Ala-339, Gln-341, His-356, Trp-359, Asn-360, Ser-361, and Glu-364. Gly-379 contacts an anthocyanidin. 2 residues coordinate UDP-alpha-D-glucose: Asp-380 and Gln-381.

Belongs to the UDP-glycosyltransferase family.

The enzyme catalyses a flavonol + UDP-alpha-D-glucose = a flavonol 3-O-beta-D-glucoside + UDP + H(+). It carries out the reaction a 7-O-hydroxy-flavonol + UDP-alpha-D-glucose = a flavonol 7-O-beta-D-glucoside + UDP + H(+). Its function is as follows. Possesses quercetin 3-O-glucosyltransferase and 7-O-glucosyltransferase activities in vitro. This Arabidopsis thaliana (Mouse-ear cress) protein is Flavonol 3-O-glucosyltransferase UGT76E12.